A 503-amino-acid polypeptide reads, in one-letter code: Glycosyltransferase family 92 protein ZK381.2 (503 aa).

Residues 7–27 (YKPCLLIILIFNSVILLFILI) traverse the membrane as a helical segment. The region spanning 156 to 441 (KPVIICISPQ…FKCYFDSFYK (286 aa)) is the GT92 domain.

Belongs to the glycosyltransferase 92 family.

It localises to the membrane. The sequence is that of Glycosyltransferase family 92 protein ZK381.2 from Caenorhabditis elegans.